We begin with the raw amino-acid sequence, 1341 residues long: uncharacterized protein (1341 aa).

The zn(2)-C6 fungal-type DNA-binding region spans 41 to 68; it reads CLLCRRRKQRCDHKLPSCTACLKAGIKC. Composition is skewed to low complexity over residues 72 to 93, 779 to 791, 864 to 906, 920 to 967, and 1036 to 1050; these read SKYSSSTSNSNTNNNTPTAGTV, SNSANAANLSNSN, SNSS…NDNN, NHNN…GNNS, and SPSKSSSISTASSHS. Disordered regions lie at residues 72 to 100, 770 to 804, 864 to 971, and 1031 to 1116; these read SKYSSSTSNSNTNNNTPTAGTVPPTPHPV, ISSGDTLHDSNSANAANLSNSNDKNISHNGGMPPA, SNSS…QYVR, and TMTN…NSNP. Residues 1057–1076 are compositionally biased toward polar residues; it reads MTQSPTPYPQTSNMLPQQHV. Over residues 1078-1090 the composition is skewed to low complexity; it reads RPLPQQQREQPQQ. A compositionally biased stretch (polar residues) spans 1091 to 1116; it reads HITSPQRFSESNFTNQLNNGMINSNP. Ser1143 carries the phosphoserine modification. Residues 1220 to 1230 show a composition bias toward polar residues; the sequence is SQEPSSLSMDK. The interval 1220–1240 is disordered; that stretch reads SQEPSSLSMDKQQQQHQQQNM.

The protein resides in the nucleus. This is an uncharacterized protein from Saccharomyces cerevisiae (strain ATCC 204508 / S288c) (Baker's yeast).